Here is a 221-residue protein sequence, read N- to C-terminus: uncharacterized protein (221 aa).

This is an uncharacterized protein from Methanocaldococcus jannaschii (strain ATCC 43067 / DSM 2661 / JAL-1 / JCM 10045 / NBRC 100440) (Methanococcus jannaschii).